Here is a 165-residue protein sequence, read N- to C-terminus: Glutamyl-tRNA(Gln) amidotransferase subunit F, mitochondrial (165 aa).

Residues Met-1–Phe-19 constitute a mitochondrion transit peptide.

This sequence belongs to the GatF family. Subunit of the heterotrimeric GatFAB amidotransferase (AdT) complex, composed of A, B and F subunits.

The protein resides in the mitochondrion inner membrane. The enzyme catalyses L-glutamyl-tRNA(Gln) + L-glutamine + ATP + H2O = L-glutaminyl-tRNA(Gln) + L-glutamate + ADP + phosphate + H(+). Allows the formation of correctly charged Gln-tRNA(Gln) through the transamidation of misacylated Glu-tRNA(Gln) in the mitochondria. The reaction takes place in the presence of glutamine and ATP through an activated gamma-phospho-Glu-tRNA(Gln). Required for proper protein synthesis within the mitochondrion. The chain is Glutamyl-tRNA(Gln) amidotransferase subunit F, mitochondrial from Candida albicans (strain WO-1) (Yeast).